The chain runs to 786 residues: DNA repair and recombination protein RAD54-like (786 aa).

The required for chromatin remodeling, strand pairing activities and coupling of ATPase activity stretch occupies residues 2-9; that stretch reads RRSLAPSQ. Residue T22 is modified to Phosphothreonine. The Helicase ATP-binding domain maps to 165 to 340; that stretch reads EGKRGSFNGC…FSLVNFVNPE (176 aa). ATP is bound at residue 178–185; the sequence is DEMGLGKT. The short motif at 291 to 294 is the DEGH box element; the sequence is DEGH. One can recognise a Helicase C-terminal domain in the interval 497 to 654; sequence LLDFMLAAIR…NNESVEKHFT (158 aa). Residues 738 to 786 form a disordered region; the sequence is EAKPAATTTDEDEELSDSKRKAKKTLASDDDDDEDFVLNCSSGEEFSGF. Residues 776-786 show a composition bias toward polar residues; that stretch reads NCSSGEEFSGF.

This sequence belongs to the SNF2/RAD54 helicase family. In terms of assembly, interacts (via N-terminus) with spn-A/Rad51.

It is found in the nucleus. Involved in mitotic DNA repair and meiotic recombination. Functions in the recombinational DNA repair pathway. Essential for interhomolog gene conversion (GC), but may have a less important role in intersister GC than spn-A/Rad51. In the presence of DNA, spn-A/Rad51 enhances the ATPase activity of okr/Rad54. The sequence is that of DNA repair and recombination protein RAD54-like from Drosophila grimshawi (Hawaiian fruit fly).